The following is a 1562-amino-acid chain: Cell wall protein RBR3 (1562 aa).

The signal sequence occupies residues 1-20 (MIIFRKSFFTFWLLLNSVLA). Residue N190 is glycosylated (N-linked (GlcNAc...) asparagine). Low complexity predominate over residues 338–353 (APGTNPTEYTTTITTT). A disordered region spans residues 338-366 (APGTNPTEYTTTITTTNSAGKPLTETGVV). N-linked (GlcNAc...) asparagine glycosylation occurs at N373. Composition is skewed to low complexity over residues 383-415 (FPTS…SQPS) and 422-729 (SSSK…ISAT). Disordered stretches follow at residues 383 to 729 (FPTS…ISAT), 1404 to 1424 (GSGS…SSSN), and 1455 to 1486 (YSSG…GNSN). N602, N679, and N705 each carry an N-linked (GlcNAc...) asparagine glycan. Gly residues predominate over residues 1407 to 1419 (SDSGSGSGSGSGS). A compositionally biased stretch (polar residues) spans 1468 to 1486 (GANNVGSNQTPTVSGGNSN). N1538 is lipidated: GPI-anchor amidated asparagine. A propeptide spans 1539–1562 (SGSKFSVGKSAFIAIILTTFIGFI) (removed in mature form).

The protein belongs to the HYR1/IFF family. The GPI-anchor is attached to the protein in the endoplasmic reticulum and serves to target the protein to the cell surface. There, the glucosamine-inositol phospholipid moiety is cleaved off and the GPI-modified mannoprotein is covalently attached via its lipidless GPI glycan remnant to the 1,6-beta-glucan of the outer cell wall layer.

It is found in the secreted. The protein localises to the cell wall. Its subcellular location is the membrane. In terms of biological role, GPI-anchored cell wall protein involved in cell wall organization, hyphal growth, as well as in host-fungal interaction and virulence. The chain is Cell wall protein RBR3 (RBR3) from Candida albicans (strain SC5314 / ATCC MYA-2876) (Yeast).